The primary structure comprises 423 residues: UPF0229 protein PSEEN0423 (423 aa).

The disordered stretch occupies residues 85–107 (GEHIARPQGGGGGGGRGKAGNSG). Residues 92-107 (QGGGGGGGRGKAGNSG) show a composition bias toward gly residues.

Belongs to the UPF0229 family.

This chain is UPF0229 protein PSEEN0423, found in Pseudomonas entomophila (strain L48).